The chain runs to 705 residues: Protein artemis (705 aa).

Thr-380 is subject to Phosphothreonine. Ser-385 is modified (phosphoserine). The segment covering 451–462 has biased composition (acidic residues); the sequence is EESNSDSGEELE. Disordered regions lie at residues 451–484, 535–569, and 638–675; these read EESN…NADP, PKLC…GWDS, and TLSG…AELP. A compositionally biased stretch (low complexity) spans 546–559; that stretch reads THISSQNSSQSTHI. Polar residues predominate over residues 560 to 569; it reads TDQGSQGWDS. Positions 652–662 are enriched in low complexity; that stretch reads SSTRADSQSSS. The residue at position 658 (Ser-658) is a Phosphoserine; by ATM.

The protein belongs to the DNA repair metallo-beta-lactamase (DRMBL) family. In terms of assembly, interacts with LIG4; the interaction is direct. Interacts with ATM. Interacts with BRCA1. Interacts with PRKDC. Interacts with TP53BP1. Also exhibits ATM- and phosphorylation-dependent interaction with the MRN complex, composed of MRE11, RAD50, and NBN. Phosphorylation on undefined residues by PRKDC may stimulate endonucleolytic activity on 5' and 3' hairpins and overhangs. PRKDC must remain present, even after phosphorylation, for efficient hairpin opening. Also phosphorylated by ATM in response to ionizing radiation (IR) and by ATR in response to ultraviolet (UV) radiation.

The protein resides in the nucleus. Its function is as follows. Required for V(D)J recombination, the process by which exons encoding the antigen-binding domains of immunoglobulins and T-cell receptor proteins are assembled from individual V, (D), and J gene segments. V(D)J recombination is initiated by the lymphoid specific RAG endonuclease complex, which generates site specific DNA double strand breaks (DSBs). These DSBs present two types of DNA end structures: hairpin sealed coding ends and phosphorylated blunt signal ends. These ends are independently repaired by the non homologous end joining (NHEJ) pathway to form coding and signal joints respectively. This protein likely exhibits single-strand specific 5'-3' exonuclease activity in isolation, and may acquire endonucleolytic activity on 5' and 3' hairpins and overhangs when in a complex with PRKDC. The latter activity may be required specifically for the resolution of closed hairpins prior to the formation of the coding joint. May also be required for the repair of complex DSBs induced by ionizing radiation, which require substantial end-processing prior to religation by NHEJ. The protein is Protein artemis (Dclre1c) of Mus musculus (Mouse).